Here is a 766-residue protein sequence, read N- to C-terminus: Pyrophosphate-energized vacuolar membrane proton pump (766 aa).

At 2 to 8 the chain is on the intravacuolar side; that stretch reads GAAILPD. Residues 9–35 traverse the membrane as a helical segment; the sequence is LGTEILIPVCAVIGIAFALFQWLLVSK. Over 36-84 the chain is Cytoplasmic; that stretch reads VKLSAVRDASPNAAAKNGYNDYLIEEEEGINDHNVVVKCAEIQNAISEG. A helical transmembrane segment spans residues 85–114; the sequence is ATSFLFTEYKYVGIFMVAFAILIFLFLGSV. Residues 115–135 lie on the Intravacuolar side of the membrane; the sequence is EGFSTSPQACSYDKTKTCKPA. A disulfide bridge links Cys-124 with Cys-132. The helical transmembrane segment at 136-163 threads the bilayer; the sequence is LATAIFSTVSFLLGGVTSLVSGFLGMKI. The Cytoplasmic segment spans residues 164-186; it reads ATYANARTTLEARKGVGKAFITA. Residues 187–216 form a helical membrane-spanning segment; that stretch reads FRSGAVMGFLLAANGLLVLYIAINLFKIYY. Residues 217–219 lie on the Intravacuolar side of the membrane; it reads GDD. The chain crosses the membrane as a helical span at residues 220 to 248; the sequence is WGGLFEAITGYGLGGSSMALFGRVGGGIY. Residues 249-286 lie on the Cytoplasmic side of the membrane; it reads TKAADVGADLVGKVERNIPEDDPRNPAVIADNVGDNVG. Substrate is bound at residue Lys-250. Residues Asp-253, Asp-257, and Asp-283 each contribute to the Mg(2+) site. A helical transmembrane segment spans residues 287–312; that stretch reads DIAGMGSDLFGSYAESSCAALVVASI. Over 313-320 the chain is Intravacuolar; that stretch reads SSFGLNHE. The chain crosses the membrane as a helical span at residues 321 to 346; it reads LTAMLYPLIVSSVGILVCLLTTLFAT. Over 347–354 the chain is Cytoplasmic; sequence DFFEIKAV. A helical transmembrane segment spans residues 355–382; it reads KEIEPALKKQLVISTVLMTIGVAVVSFV. Topologically, residues 383–401 are intravacuolar; it reads ALPTSFTIFNFGVQKDVKS. The chain crosses the membrane as a helical span at residues 402–425; the sequence is WQLFLCVAVGLWAGLIIGFVTEYY. At 426–447 the chain is on the cytoplasmic side; it reads TSNAYSPVQDVADSCRTGAATN. A helical membrane pass occupies residues 448-472; sequence VIFGLALGYKSVIIPIFAIAISIFV. At 473 to 478 the chain is on the intravacuolar side; sequence SFTFAA. A helical membrane pass occupies residues 479-505; sequence MYGIAVAALGMLSTIATGLAIDAYGPI. Topologically, residues 506–534 are cytoplasmic; sequence SDNAGGIAEMAGMSHRIRERTDALDAAGN. Residues Asp-507 and Asn-534 each contribute to the Mg(2+) site. The helical transmembrane segment at 535 to 563 threads the bilayer; it reads TTAAIGKGFAIGSAALVSLALFGAFVSRA. The Intravacuolar portion of the chain corresponds to 564–573; that stretch reads SITTVDVLTP. A helical transmembrane segment spans residues 574-602; the sequence is KVFIGLIVGAMLPYWFSAMTMKSVGSAAL. At 603-631 the chain is on the cytoplasmic side; it reads KMVEEVRRQFNTIPGLMEGTAKPDYATCV. Residues 632-660 form a helical membrane-spanning segment; it reads KISTDASIKEMIPPGALVMLTPLVVGILF. Position 661 (Gly-661) is a topological domain, intravacuolar. Residues 662-689 form a helical membrane-spanning segment; it reads VETLSGVLAGSLVSGVQIAISASNTGGA. At 690 to 732 the chain is on the cytoplasmic side; it reads WDNAKKYIEAGASEHARSLGPKGSDCHKAAVIGDTIGDPLKDT. 2 residues coordinate Mg(2+): Asp-691 and Asp-727. Substrate is bound at residue Lys-730. A helical membrane pass occupies residues 733 to 758; sequence SGPSLNILIKLMAVESLVFAPFFATH. The Intravacuolar segment spans residues 759 to 765; sequence GGLLFKI.

Belongs to the H(+)-translocating pyrophosphatase (TC 3.A.10) family. K(+)-stimulated subfamily. In terms of assembly, homodimer.

It localises to the vacuole membrane. The enzyme catalyses diphosphate + H2O + H(+)(in) = 2 phosphate + 2 H(+)(out). With respect to regulation, inhibited by excess pyrophosphate as well as excess Mg(2+). Inhibition by ATP, GTP, and CTP is reversed by increasing the Mg(2+) concentration. This suggests that the substrate is a particular metal complex such as MgPPi(2-). Modification of Asp-283 with DCCD abolishes pyrophosphatase activity. Its function is as follows. Proton-translocating inorganic pyrophosphatase that contributes to the transtonoplast (from cytosol to vacuole lumen) H(+)-electrochemical potential difference. It establishes a proton gradient of similar and often greater magnitude than the H(+)-ATPase on the same membrane. This chain is Pyrophosphate-energized vacuolar membrane proton pump, found in Vigna radiata var. radiata (Mung bean).